Here is a 430-residue protein sequence, read N- to C-terminus: GTPase Obg (430 aa).

The region spanning 1 to 158 (MFVDQVKISL…LDVSLELKLL (158 aa)) is the Obg domain. Positions 118 to 145 (KGGRGGRGNSRFATPRNPAPDFSEKGEP) are disordered. In terms of domain architecture, OBG-type G spans 159-329 (ADVGLVGFPS…LLYAIADKLE (171 aa)). Residues 165–172 (GFPSVGKS), 190–194 (FTTIK), 212–215 (DLPG), 282–285 (NKMD), and 310–312 (STI) contribute to the GTP site. Residues serine 172 and threonine 192 each contribute to the Mg(2+) site. The region spanning 352 to 430 (KHTPSQDKFT…ILGGEFEFVE (79 aa)) is the OCT domain.

It belongs to the TRAFAC class OBG-HflX-like GTPase superfamily. OBG GTPase family. Monomer. Mg(2+) is required as a cofactor.

The protein localises to the cytoplasm. Its function is as follows. An essential GTPase which binds GTP, GDP and possibly (p)ppGpp with moderate affinity, with high nucleotide exchange rates and a fairly low GTP hydrolysis rate. Plays a role in control of the cell cycle, stress response, ribosome biogenesis and in those bacteria that undergo differentiation, in morphogenesis control. The sequence is that of GTPase Obg from Staphylococcus aureus (strain Mu3 / ATCC 700698).